The primary structure comprises 153 residues: Putative riboflavin kinase (153 aa).

Residues T28 and N30 each contribute to the Mg(2+) site. E80 acts as the Nucleophile in catalysis.

Monomer. Requires Zn(2+) as cofactor. The cofactor is Mg(2+).

The protein resides in the cytoplasm. The enzyme catalyses riboflavin + ATP = FMN + ADP + H(+). Its pathway is cofactor biosynthesis; FMN biosynthesis; FMN from riboflavin (ATP route): step 1/1. Its function is as follows. Catalyzes the phosphorylation of riboflavin (vitamin B2) to form flavin-mononucleotide (FMN). The protein is Putative riboflavin kinase of Drosophila melanogaster (Fruit fly).